Consider the following 66-residue polypeptide: DNA gyrase inhibitor YacG (66 aa).

Zn(2+) is bound by residues C9, C12, C28, and C32.

The protein belongs to the DNA gyrase inhibitor YacG family. As to quaternary structure, interacts with GyrB. Zn(2+) is required as a cofactor.

In terms of biological role, inhibits all the catalytic activities of DNA gyrase by preventing its interaction with DNA. Acts by binding directly to the C-terminal domain of GyrB, which probably disrupts DNA binding by the gyrase. This is DNA gyrase inhibitor YacG from Pseudomonas fluorescens (strain SBW25).